Here is a 142-residue protein sequence, read N- to C-terminus: ATP synthase epsilon chain (142 aa).

The protein belongs to the ATPase epsilon chain family. As to quaternary structure, F-type ATPases have 2 components, CF(1) - the catalytic core - and CF(0) - the membrane proton channel. CF(1) has five subunits: alpha(3), beta(3), gamma(1), delta(1), epsilon(1). CF(0) has three main subunits: a, b and c.

The protein resides in the cell inner membrane. Its function is as follows. Produces ATP from ADP in the presence of a proton gradient across the membrane. The protein is ATP synthase epsilon chain of Histophilus somni (strain 2336) (Haemophilus somnus).